The following is a 223-amino-acid chain: GTP-binding nuclear protein Ran (223 aa).

The Small GTPase Ran-type domain occupies 8–172 (VVAEFKLVLV…LWILRKLTGD (165 aa)). A GTP-binding site is contributed by 19 to 26 (DGGVGKTT). The interval 38-46 (KRYIATQGV) is switch-I. Residues Gly-69, 123-126 (NKVD), and 151-153 (SAK) contribute to the GTP site. Residues 69 to 85 (GQEKLGGLREGYYIGAD) form a switch-II region.

The protein belongs to the small GTPase superfamily. Ran family. As to quaternary structure, monomer. Found in a nuclear export complex with RanGTP, exportin and pre-miRNA.

It is found in the nucleus. In terms of biological role, GTP-binding protein involved in nucleocytoplasmic transport. Required for the import of protein into the nucleus and also for RNA export. Involved in chromatin condensation and control of cell cycle. The sequence is that of GTP-binding nuclear protein Ran from Tetrahymena pyriformis.